Reading from the N-terminus, the 567-residue chain is Methionine--tRNA ligase (567 aa).

A 'HIGH' region motif is present at residues 11-21 (PYVQTVPHLGN). Zn(2+)-binding residues include Cys143, Cys146, Cys156, and Cys159. The short motif at 331-335 (KFSKS) is the 'KMSKS' region element. Lys334 lines the ATP pocket.

The protein belongs to the class-I aminoacyl-tRNA synthetase family. MetG type 1 subfamily. Requires Zn(2+) as cofactor.

It is found in the cytoplasm. The catalysed reaction is tRNA(Met) + L-methionine + ATP = L-methionyl-tRNA(Met) + AMP + diphosphate. Functionally, is required not only for elongation of protein synthesis but also for the initiation of all mRNA translation through initiator tRNA(fMet) aminoacylation. The protein is Methionine--tRNA ligase of Pyrobaculum islandicum (strain DSM 4184 / JCM 9189 / GEO3).